The primary structure comprises 220 residues: MADSVHLNRRGVLFVLSSPSGAGKTTISRMMLEEDKDIALSVSATTRPPRPGEIDGVHYHFVDTDTFKKMAADGAFLEWAHVFGHRYGTPRAPVEELLAAGKDVLFDIDWQGAQQLYQEAGPDVVRVFVLPPTMEELERRLRARGTDSDEVIAARMARAANEISHWDGYDYVLINDHVGECYGEVMAILRAERLKRRRQIGLIGFARDLIRSVPDADTKL.

The region spanning 11–190 (GVLFVLSSPS…CYGEVMAILR (180 aa)) is the Guanylate kinase-like domain. 18-25 (SPSGAGKT) contacts ATP.

It belongs to the guanylate kinase family.

It localises to the cytoplasm. The catalysed reaction is GMP + ATP = GDP + ADP. Functionally, essential for recycling GMP and indirectly, cGMP. The chain is Guanylate kinase from Sphingopyxis alaskensis (strain DSM 13593 / LMG 18877 / RB2256) (Sphingomonas alaskensis).